Consider the following 420-residue polypeptide: Protein-lysine 6-oxidase (420 aa).

A signal peptide spans 1-27 (MRCAPPGLLLAQLHACIFWSGLWPAGC). Positions 28 to 171 (QSPPAAWRQR…RPGREDVMVG (144 aa)) are cleaved as a propeptide — removed by BMP1. Residues 54-177 (AQYQPPRRRQ…VMVGDDPYSP (124 aa)) form a disordered region. The N-linked (GlcNAc...) asparagine glycan is linked to asparagine 78. Low complexity predominate over residues 82-92 (PRAAAAAAARP). Residues 93–105 (QPEPQPQAQPQPR) show a composition bias toward pro residues. Composition is skewed to basic residues over residues 107–119 (RSSR…RRHW) and 134–147 (APRR…SRRR). Tyrosine 190 is modified (sulfotyrosine). The tract at residues 216–420 (PDLVPDPYYI…YASGCTISPY (205 aa)) is lysyl-oxidase like. Disulfide bonds link cysteine 241-cysteine 247, cysteine 294-cysteine 343, cysteine 327-cysteine 333, cysteine 354-cysteine 364, and cysteine 401-cysteine 415. Histidine 295, histidine 297, and histidine 299 together coordinate Cu cation. The lysine tyrosylquinone (Lys-Tyr) cross-link spans 323–358 (KASFCLEDTSCDYGYYRRYACTAHTQGLSPGCYDTY). A 2',4',5'-topaquinone modification is found at tyrosine 358.

This sequence belongs to the lysyl oxidase family. Cu cation serves as cofactor. It depends on lysine tyrosylquinone residue as a cofactor. Post-translationally, the lysine tyrosylquinone cross-link (LTQ) is generated by condensation of the epsilon-amino group of a lysine with a topaquinone produced by oxidation of tyrosine. In terms of processing, proteolytically cleaved by BMP1 which removes the propeptide. Also proteolytically cleaved by ADAMTS2 and ADAMTS14, but not by ADAMTS3, at an additional cleavage site downstream of the BMP1 cleavage site. The propeptide plays a role in directing the deposition of this enzyme to elastic fibers, via interaction with tropoelastin. Cleavage by BMP1 to remove the propeptide does not increase enzymatic activity but increases binding to collagen. Cleavage by ADAMTS2 produces a form with reduced collagen-binding activity. Sulfated at Tyr-190 and also at either Tyr-186 or Tyr-187 which enhances binding to collagen.

Its subcellular location is the secreted. The protein localises to the extracellular space. It carries out the reaction L-lysyl-[protein] + O2 + H2O = (S)-2-amino-6-oxohexanoyl-[protein] + H2O2 + NH4(+). Its function is as follows. Responsible for the post-translational oxidative deamination of peptidyl lysine residues in precursors to fibrous collagen and elastin. In terms of biological role, in addition to cross linking of extracellular matrix proteins, it may have a direct role in tumor suppression. This Gallus gallus (Chicken) protein is Protein-lysine 6-oxidase (LOX).